The sequence spans 1242 residues: MMVENWPAKPEGSQWTDDQWKAVVAHGRDILVAAAAGSGKTAVLVERIIKKIINEENPVDVDRLLVVTFTNAAAQEMKNRIGEALEKVLIEEPSSRHIRKQLSLLNKASISTIHSFCLQVIRSYYYMLDIDPRFRIANQTENELLKEEVLDDILEEEYGMEENQLFFELVDRYTSDRNDDDLQRMILALHTAAGAHPNPEKWLDRLVEAYNVEGKTIEDLMYASYLLEDVKFQLETATEHIRKAMELAMLPDGPAPRMETLQTDLVLLETLSHAARKSWTSVYEAMQHVSWQTLKRIKKSDYNEDIVKQVDSLRNKAKDEVKKLQEELFSRKPESFLRDFQEMHPVLGKLVQLVKEFSNRFQAIKRDKGMVDFTDLEHFCLQILSEQGEDGELRPSPVALQYRNRFAEVLVDEYQDTNFVQESIIKLVTKDSEQEGNLFMVGDVKQSIYRFRLAEPGLFLGKYKRFTQEGLEGGMKIDLAKNFRSRHEVLAGTNFIFKQIMGEEVGEIEYDADAELKLGASYPEGEDVAAELLCIHQSEEEVLDGEEGEEVEKAQLEARLIAQRIKAMVDSGYTVYDRKTNEMRQVQYRDFVILLRSMPWAPQIMEELKLQGIPVYAELATGYFEATEVNIMMNVFRVIDNPVQDIPLAAVLRSPIVGLNDEELAMLRAHAKKGSFYEVMRSFLRGAPLEGGKELHEKLKWFYHLLQGWREFARQQSLSDLIWKVYRETGYYDFVGGLPGGKQRQANLRVLYDRARQYEATSFRGLFRFLRFIERILERGDDMGTARALGEQEDVVRIMTIHKSKGLEFPVVFVAGLGRRFNTQDLMQRFLLHKDFGFGSQFIDPRKRIKYTTLSQLAIKRKMKRELIAEEMRVLYVALTRAKEKLILIGTVKDKEKEMEKWLDTREHTEWLLPDYVRASASCYLDWIAPSLYRHRDSEILLELGQGTIPNEIYEYDTSWKVEFVDGKTLLAPEPAQEEKQELLEALREKKAVPLESERKDEVYNRLTWKYEYEDATLQRAKQSVTEIKRNYQSEDGSDTAFIQKLRAPIRTRPRFMEKKGLTYAERGTAVHAVMQHVDLKQSITIESIQEQIAKMVNKEILTFEQAEEISVERIVAFFESHLGKRVLEAKSVEREVPFTMMLSAKEAYQNWQGKSEETILVQGVIDCMIEEDDGITLIDFKTDTIEGKFPGGFDQAKPILEERYKVQLSLYAKALEKTLQHPVKEKCLYFFDGNHVITIEE.

The UvrD-like helicase ATP-binding domain maps to 13–486; that stretch reads SQWTDDQWKA…IDLAKNFRSR (474 aa). 34–41 is an ATP binding site; that stretch reads AAAGSGKT. Positions 506–806 constitute a UvrD-like helicase C-terminal domain; it reads GEIEYDADAE…RIMTIHKSKG (301 aa).

It belongs to the helicase family. AddA subfamily. In terms of assembly, heterodimer of AddA and AddB/RexB. Mg(2+) serves as cofactor.

The catalysed reaction is Couples ATP hydrolysis with the unwinding of duplex DNA by translocating in the 3'-5' direction.. The enzyme catalyses ATP + H2O = ADP + phosphate + H(+). The heterodimer acts as both an ATP-dependent DNA helicase and an ATP-dependent, dual-direction single-stranded exonuclease. Recognizes the chi site generating a DNA molecule suitable for the initiation of homologous recombination. The AddA nuclease domain is required for chi fragment generation; this subunit has the helicase and 3' -&gt; 5' nuclease activities. This is ATP-dependent helicase/nuclease subunit A from Bacillus cytotoxicus (strain DSM 22905 / CIP 110041 / 391-98 / NVH 391-98).